The primary structure comprises 115 residues: Large ribosomal subunit protein bL20c (115 aa).

It belongs to the bacterial ribosomal protein bL20 family.

Its subcellular location is the plastid. It localises to the chloroplast. Its function is as follows. Binds directly to 23S ribosomal RNA and is necessary for the in vitro assembly process of the 50S ribosomal subunit. It is not involved in the protein synthesizing functions of that subunit. This Angiopteris evecta (Mule's foot fern) protein is Large ribosomal subunit protein bL20c.